The primary structure comprises 243 residues: Uridylate kinase (243 aa).

15–18 (KLSG) serves as a coordination point for ATP. Gly56 is a UMP binding site. ATP is bound by residues Gly57 and Arg61. 138–145 (TGNPYFST) is a binding site for UMP. Asn166, Tyr172, and Asp175 together coordinate ATP.

This sequence belongs to the UMP kinase family. In terms of assembly, homohexamer.

It is found in the cytoplasm. The catalysed reaction is UMP + ATP = UDP + ADP. It participates in pyrimidine metabolism; CTP biosynthesis via de novo pathway; UDP from UMP (UMPK route): step 1/1. Inhibited by UTP. Catalyzes the reversible phosphorylation of UMP to UDP. The polypeptide is Uridylate kinase (Mycoplasma genitalium (strain ATCC 33530 / DSM 19775 / NCTC 10195 / G37) (Mycoplasmoides genitalium)).